We begin with the raw amino-acid sequence, 277 residues long: Shikimate dehydrogenase (NADP(+)) (277 aa).

Residues 14 to 16 (SKS) and Thr-61 contribute to the shikimate site. The active-site Proton acceptor is Lys-65. Asp-77 is an NADP(+) binding site. Residues Asn-86 and Asp-102 each coordinate shikimate. NADP(+) contacts are provided by residues 127–131 (GAGGA), 151–156 (NRTPDK), and Met-215. Residue Tyr-217 coordinates shikimate. Gly-239 serves as a coordination point for NADP(+).

This sequence belongs to the shikimate dehydrogenase family. Homodimer.

The catalysed reaction is shikimate + NADP(+) = 3-dehydroshikimate + NADPH + H(+). The protein operates within metabolic intermediate biosynthesis; chorismate biosynthesis; chorismate from D-erythrose 4-phosphate and phosphoenolpyruvate: step 4/7. Functionally, involved in the biosynthesis of the chorismate, which leads to the biosynthesis of aromatic amino acids. Catalyzes the reversible NADPH linked reduction of 3-dehydroshikimate (DHSA) to yield shikimate (SA). The polypeptide is Shikimate dehydrogenase (NADP(+)) (Nitrosomonas eutropha (strain DSM 101675 / C91 / Nm57)).